A 354-amino-acid polypeptide reads, in one-letter code: GDSL esterase/lipase At3g09930 (354 aa).

The first 24 residues, 1–24 (MELPKLLISLFLFSFSSFFLGAES), serve as a signal peptide directing secretion. The active-site Nucleophile is the Ser-46. N-linked (GlcNAc...) asparagine glycans are attached at residues Asn-133, Asn-233, Asn-237, Asn-256, and Asn-300. Residues Asp-329 and His-332 contribute to the active site.

This sequence belongs to the 'GDSL' lipolytic enzyme family.

It is found in the secreted. In Arabidopsis thaliana (Mouse-ear cress), this protein is GDSL esterase/lipase At3g09930.